Consider the following 516-residue polypeptide: Thioredoxin reductase 2, mitochondrial (516 aa).

Residue 62–79 (DYVKPTPVGTKWGIGGTC) coordinates FAD. A disulfide bond links cysteine 79 and cysteine 84. Histidine 489 acts as the Proton acceptor in catalysis.

This sequence belongs to the class-I pyridine nucleotide-disulfide oxidoreductase family. In terms of assembly, homodimer. Requires FAD as cofactor.

It localises to the mitochondrion. It carries out the reaction [thioredoxin]-dithiol + NADP(+) = [thioredoxin]-disulfide + NADPH + H(+). Thioredoxin system is a major player in glutathione metabolism, due to the demonstrated absence of a glutathione reductase. Functionally interacts with the Sod/Cat reactive oxidation species (ROS) defense system and thereby has a role in preadult development and life span. Lack of a glutathione reductase suggests antioxidant defense in Drosophila, and probably in related insects, differs fundamentally from that in other organisms. The sequence is that of Thioredoxin reductase 2, mitochondrial from Drosophila melanogaster (Fruit fly).